Consider the following 231-residue polypeptide: Ribose-5-phosphate isomerase A (231 aa).

Substrate is bound by residues 28 to 31 (TGST), 83 to 86 (DGAD), and 96 to 99 (KGGG). Residue Glu-105 is the Proton acceptor of the active site. Residue Lys-123 participates in substrate binding.

It belongs to the ribose 5-phosphate isomerase family. In terms of assembly, homodimer.

It carries out the reaction aldehydo-D-ribose 5-phosphate = D-ribulose 5-phosphate. Its pathway is carbohydrate degradation; pentose phosphate pathway; D-ribose 5-phosphate from D-ribulose 5-phosphate (non-oxidative stage): step 1/1. In terms of biological role, catalyzes the reversible conversion of ribose-5-phosphate to ribulose 5-phosphate. This is Ribose-5-phosphate isomerase A from Parvibaculum lavamentivorans (strain DS-1 / DSM 13023 / NCIMB 13966).